The following is a 690-amino-acid chain: Protein arginine N-methyltransferase 7 (690 aa).

SAM-dependent MTase PRMT-type domains are found at residues 5–355 and 364–690; these read FQDS…FSLW and KEPL…EEEQ.

Belongs to the class I-like SAM-binding methyltransferase superfamily. Protein arginine N-methyltransferase family. PRMT7 subfamily.

Its function is as follows. Essential arginine methyltransferase that can both catalyze the formation of omega-N monomethylarginine (MMA) and symmetrical dimethylarginine (sDMA). Specifically mediates the symmetrical dimethylation of arginine residues in the small nuclear ribonucleoproteins SmD1 and SmD3. The chain is Protein arginine N-methyltransferase 7 (Art7) from Anopheles gambiae (African malaria mosquito).